The primary structure comprises 337 residues: 1-aminocyclopropane-1-carboxylate deaminase (337 aa).

Lys50 carries the N6-(pyridoxal phosphate)lysine modification. Residue Ser77 is the Nucleophile of the active site.

Belongs to the ACC deaminase/D-cysteine desulfhydrase family. As to quaternary structure, homotrimer. Pyridoxal 5'-phosphate is required as a cofactor.

The catalysed reaction is 1-aminocyclopropane-1-carboxylate + H2O = 2-oxobutanoate + NH4(+). Functionally, catalyzes a cyclopropane ring-opening reaction, the irreversible conversion of 1-aminocyclopropane-1-carboxylate (ACC) to ammonia and alpha-ketobutyrate. Allows growth on ACC as a nitrogen source. The chain is 1-aminocyclopropane-1-carboxylate deaminase from Bradyrhizobium diazoefficiens (strain JCM 10833 / BCRC 13528 / IAM 13628 / NBRC 14792 / USDA 110).